Consider the following 117-residue polypeptide: Immunoglobulin kappa variable 1D-16 (117 aa).

An N-terminal signal peptide occupies residues 1-22; it reads MDMRVLAQLLGLLLLCFPGARC. Residues 23-45 are framework-1; the sequence is DIQMTQSPSSLSASVGDRVTITC. In terms of domain architecture, Ig-like spans 24–117; sequence IQMTQSPSSL…YYCQQYNSYP (94 aa). Cysteines 45 and 110 form a disulfide. Residues 46–56 are complementarity-determining-1; that stretch reads RASQGISSWLA. The framework-2 stretch occupies residues 57–71; sequence WYQQKPEKAPKSLIY. The tract at residues 72–78 is complementarity-determining-2; the sequence is AASSLQS. Residues 79–110 form a framework-3 region; it reads GVPSRFSGSGSGTDFTLTISSLQPEDFATYYC. The tract at residues 111 to 117 is complementarity-determining-3; the sequence is QQYNSYP.

As to quaternary structure, immunoglobulins are composed of two identical heavy chains and two identical light chains; disulfide-linked.

The protein resides in the secreted. It localises to the cell membrane. In terms of biological role, v region of the variable domain of immunoglobulin light chains that participates in the antigen recognition. Immunoglobulins, also known as antibodies, are membrane-bound or secreted glycoproteins produced by B lymphocytes. In the recognition phase of humoral immunity, the membrane-bound immunoglobulins serve as receptors which, upon binding of a specific antigen, trigger the clonal expansion and differentiation of B lymphocytes into immunoglobulins-secreting plasma cells. Secreted immunoglobulins mediate the effector phase of humoral immunity, which results in the elimination of bound antigens. The antigen binding site is formed by the variable domain of one heavy chain, together with that of its associated light chain. Thus, each immunoglobulin has two antigen binding sites with remarkable affinity for a particular antigen. The variable domains are assembled by a process called V-(D)-J rearrangement and can then be subjected to somatic hypermutations which, after exposure to antigen and selection, allow affinity maturation for a particular antigen. In Homo sapiens (Human), this protein is Immunoglobulin kappa variable 1D-16.